The primary structure comprises 248 residues: ATP synthase subunit a (248 aa).

The next 6 membrane-spanning stretches (helical) occupy residues Thr34–Gly54, Tyr91–Ile111, Ile121–Val141, Phe147–Ile167, Phe197–Ile217, and Leu220–Leu240.

Belongs to the ATPase A chain family. In terms of assembly, F-type ATPases have 2 components, CF(1) - the catalytic core - and CF(0) - the membrane proton channel. CF(1) has five subunits: alpha(3), beta(3), gamma(1), delta(1), epsilon(1). CF(0) has four main subunits: a, b, b' and c.

It localises to the cell inner membrane. Key component of the proton channel; it plays a direct role in the translocation of protons across the membrane. In Dinoroseobacter shibae (strain DSM 16493 / NCIMB 14021 / DFL 12), this protein is ATP synthase subunit a.